Here is a 318-residue protein sequence, read N- to C-terminus: Formimidoylglutamase (318 aa).

Mn(2+) is bound by residues His130, Asp155, His157, Asp159, Asp246, and Asp248.

This sequence belongs to the arginase family. Mn(2+) is required as a cofactor.

It carries out the reaction N-formimidoyl-L-glutamate + H2O = formamide + L-glutamate. It participates in amino-acid degradation; L-histidine degradation into L-glutamate; L-glutamate from N-formimidoyl-L-glutamate (hydrolase route): step 1/1. In terms of biological role, catalyzes the conversion of N-formimidoyl-L-glutamate to L-glutamate and formamide. In Klebsiella pneumoniae subsp. pneumoniae (strain ATCC 700721 / MGH 78578), this protein is Formimidoylglutamase.